A 972-amino-acid polypeptide reads, in one-letter code: Translation initiation factor IF-2 (972 aa).

Residues 49–63 (HLRKSHGATDGDKRK) are compositionally biased toward basic and acidic residues. 2 disordered regions span residues 49–86 (HLRKSHGATDGDKRKITLTRKHTSEIKQSDATGKARTI) and 100–383 (DDVA…TFQA). Low complexity predominate over residues 105–114 (GAEQGQAQVA). Basic and acidic residues predominate over residues 121–177 (ELKRREEEARREAELLEKQAQELRERQERLEREEAERRAREEAAEAERRRAEEEAAA). Residues 178 to 209 (KRAAAAAVEAQQAAAQQAAEAQQETAGAQSAQ) are compositionally biased toward low complexity. A compositionally biased stretch (basic and acidic residues) spans 210–261 (DEARAAAERAAQREAAKKAEDAAREAADKTRAEQEEIRKRREAAEAEARAIR). The span at 277–286 (PPKPVEPPKP) shows a compositional bias: pro residues. Residues 298-327 (KPAGAGAARPAVKKPAGAAPATTQAPAGAG) show a composition bias toward low complexity. The segment covering 356–369 (SSGGVDRGWRGGPK) has biased composition (gly residues). Residues 472 to 641 (PRPPVVTVMG…LLQAEVLELK (170 aa)) enclose the tr-type G domain. Residues 481–488 (GHVDHGKT) are G1. 481–488 (GHVDHGKT) is a binding site for GTP. Residues 506-510 (GITQH) form a G2 region. The G3 stretch occupies residues 527 to 530 (DTPG). Residues 527-531 (DTPGH) and 581-584 (NKID) each bind GTP. Positions 581 to 584 (NKID) are G4. Residues 617-619 (SAK) are G5.

The protein belongs to the TRAFAC class translation factor GTPase superfamily. Classic translation factor GTPase family. IF-2 subfamily.

The protein localises to the cytoplasm. Functionally, one of the essential components for the initiation of protein synthesis. Protects formylmethionyl-tRNA from spontaneous hydrolysis and promotes its binding to the 30S ribosomal subunits. Also involved in the hydrolysis of GTP during the formation of the 70S ribosomal complex. This Burkholderia ambifaria (strain MC40-6) protein is Translation initiation factor IF-2.